We begin with the raw amino-acid sequence, 449 residues long: Tubulin alpha-2 chain (449 aa).

Residue Gln-11 participates in GTP binding. Lys-40 is modified (N6-acetyllysine). Positions 140, 144, 145, 179, 206, and 228 each coordinate GTP. Residue Glu-254 is part of the active site.

Belongs to the tubulin family. Dimer of alpha and beta chains. A typical microtubule is a hollow water-filled tube with an outer diameter of 25 nm and an inner diameter of 15 nM. Alpha-beta heterodimers associate head-to-tail to form protofilaments running lengthwise along the microtubule wall with the beta-tubulin subunit facing the microtubule plus end conferring a structural polarity. Microtubules usually have 13 protofilaments but different protofilament numbers can be found in some organisms and specialized cells. In terms of processing, acetylation of alpha chains at Lys-40 stabilizes microtubules and affects affinity and processivity of microtubule motors. This modification has a role in multiple cellular functions, ranging from cell motility, cell cycle progression or cell differentiation to intracellular trafficking and signaling.

It localises to the cytoplasm. The protein resides in the cytoskeleton. The enzyme catalyses GTP + H2O = GDP + phosphate + H(+). Functionally, tubulin is the major constituent of microtubules, a cylinder consisting of laterally associated linear protofilaments composed of alpha- and beta-tubulin heterodimers. Microtubules grow by the addition of GTP-tubulin dimers to the microtubule end, where a stabilizing cap forms. Below the cap, tubulin dimers are in GDP-bound state, owing to GTPase activity of alpha-tubulin. The polypeptide is Tubulin alpha-2 chain (Stylonychia lemnae (Ciliate)).